The chain runs to 185 residues: Ribosome-recycling factor (185 aa).

The protein belongs to the RRF family.

It localises to the cytoplasm. Responsible for the release of ribosomes from messenger RNA at the termination of protein biosynthesis. May increase the efficiency of translation by recycling ribosomes from one round of translation to another. The chain is Ribosome-recycling factor from Thermobifida fusca (strain YX).